We begin with the raw amino-acid sequence, 481 residues long: Drebrin-like protein (481 aa).

The 129-residue stretch at serine 3–asparagine 131 folds into the ADF-H domain. Positions tyrosine 217–lysine 227 are enriched in basic and acidic residues. The tract at residues tyrosine 217–glycine 423 is disordered. Positions glutamine 228 to alanine 237 are enriched in low complexity. The segment covering threonine 248–threonine 261 has biased composition (polar residues). Pro residues predominate over residues proline 291–proline 300. Acidic residues predominate over residues glutamine 325–glutamine 335. A compositionally biased stretch (low complexity) spans glutamine 336–glutamine 413. In terms of domain architecture, SH3 spans serine 422–leucine 481.

It belongs to the ABP1 family.

It is found in the cytoplasm. The protein localises to the cytoskeleton. Its subcellular location is the cell projection. The protein resides in the pseudopodium. Its function is as follows. Actin-binding adapter protein. Binds to F-actin but is not involved in actin polymerization, capping or bundling. Does not bind G-actin. Controls pseudopodium number and motility in early stages of chemotactic aggregation. The chain is Drebrin-like protein (abpE-1) from Dictyostelium discoideum (Social amoeba).